Here is a 196-residue protein sequence, read N- to C-terminus: Cysteine/O-acetylserine efflux protein (196 aa).

A helical transmembrane segment spans residues M1–G21. Residues P22–R41 are Cytoplasmic-facing. A helical transmembrane segment spans residues V42–F62. Topologically, residues S63–R70 are periplasmic. Residues F71 to A91 traverse the membrane as a helical segment. At K92 to Q114 the chain is on the cytoplasmic side. Residues F115–V135 traverse the membrane as a helical segment. Residues T136–P139 are Periplasmic-facing. The helical transmembrane segment at V140–W160 threads the bilayer. At A161–L170 the chain is on the cytoplasmic side. The chain crosses the membrane as a helical span at residues F171–V191. The Periplasmic segment spans residues R192 to E196.

Belongs to the Rht family.

It localises to the cell inner membrane. The enzyme catalyses O-acetyl-L-serine(in) = O-acetyl-L-serine(out). The catalysed reaction is L-cysteine(in) = L-cysteine(out). Functionally, exporter of O-acetylserine (OAS) and cysteine. In Klebsiella pneumoniae subsp. pneumoniae (strain ATCC 700721 / MGH 78578), this protein is Cysteine/O-acetylserine efflux protein (eamB).